The sequence spans 386 residues: IgA receptor (386 aa).

The signal sequence occupies residues 1–41 (MARKDTNKQYSLRKLKTGTASVAVAVAVLGAGFANQTEVKA). The interval 42–152 (AEIKKPQADS…QKKHQQEQQQ (111 aa)) is igA-binding. Basic and acidic residues-rich tracts occupy residues 79–88 (YADDKEKDPQ), 97–128 (QDLRKREGQYQDKIEELEKERKEKQERQEQLE), 134–166 (EADKHYQEQQKKHQQEQQQLEAEKQKLAKDKQI), 174–201 (LSRDLEASRAAKKELEAEHQKLKEEKQI), 209–221 (LSRDLEASREAKK), 233–243 (EHQKLKEDKQI), and 251–267 (LSRDLEASREAKKKVEA). Disordered regions lie at residues 79-221 (YADD…EAKK) and 233-268 (EHQKLKEDKQISDASRQGLSRDLEASREAKKKVEAD). C repeat units follow at residues 158–192 (QKLAKDKQISDASRQGLSRDLEASRAAKKELEAEH), 193–227 (QKLKEEKQISDASRQGLSRDLEASREAKKKVEADL), and 235–269 (QKLKEDKQISDASRQGLSRDLEASREAKKKVEADL). D repeat units lie at residues 302–307 (ARLEAE), 308–313 (AKALKE), 316–321 (AKQAEE), and 323–328 (AKLKGN). The segment at 323 to 360 (AKLKGNQTPNAKVAPQANRSRSAMTQQKRTLPSTGETA) is disordered. Residues 339 to 359 (ANRSRSAMTQQKRTLPSTGET) are compositionally biased toward polar residues. Residues 353–357 (LPSTG) carry the LPXTG sorting signal motif. Residue threonine 356 is modified to Pentaglycyl murein peptidoglycan amidated threonine. Residues 357-386 (GETANPFFTAAAATVMVSAGMLALKRKEEN) constitute a propeptide, removed by sortase.

Belongs to the M protein family.

It is found in the secreted. The protein resides in the cell wall. Its function is as follows. Binds IgA of both subclasses, and also binds polyclonal IgG weakly. The sequence is that of IgA receptor (arp4) from Streptococcus pyogenes.